The primary structure comprises 276 residues: uncharacterized protein (276 aa).

To E.cuniculi ECU05_1600/ECU11_0130.

This is an uncharacterized protein from Encephalitozoon cuniculi (strain GB-M1) (Microsporidian parasite).